The following is a 3412-amino-acid chain: Genome polyprotein (3412 aa).

The Cytoplasmic portion of the chain corresponds to M1–E104. The hydrophobic; homodimerization of capsid protein C stretch occupies residues P38–L72. Positions S102–G121 are cleaved as a propeptide — ER anchor for the capsid protein C, removed in mature form by serine protease NS3. A helical membrane pass occupies residues M105 to V125. Residues R126–R244 are Extracellular-facing. N134 and N150 each carry an N-linked (GlcNAc...) asparagine; by host glycan. Residues W245–N265 traverse the membrane as a helical segment. The Cytoplasmic segment spans residues N266–R270. The helical transmembrane segment at V271 to S285 threads the bilayer. Topologically, residues A286–L730 are extracellular. Intrachain disulfides connect C288/C315, C345/C401, C345/C406, C359/C390, C377/C401, C377/C406, C467/C568, and C585/C615. Positions D383–G396 are fusion peptide. The helical transmembrane segment at F731–I751 threads the bilayer. Residues N752–T757 lie on the Extracellular side of the membrane. A helical membrane pass occupies residues M758–A778. Topologically, residues D779–E1132 are extracellular. Disulfide bonds link C782-C793, C833-C921, C957-C1002, C1058-C1107, C1069-C1091, and C1090-C1094. N908 and N986 each carry an N-linked (GlcNAc...) asparagine; by host glycan. A helical membrane pass occupies residues V1133–K1153. Topologically, residues R1154–A1201 are cytoplasmic. Residues M1202–L1222 traverse the membrane as a helical segment. Residues R1223–P1287 are Lumenal-facing. Residues V1288–V1308 traverse the membrane as a helical segment. Residues L1309–S1355 lie on the Cytoplasmic side of the membrane. The chain crosses the membrane as a helical span at residues I1356–F1376. Residues Q1377 to D1378 lie on the Lumenal side of the membrane. A helical transmembrane segment spans residues M1379 to A1399. The Cytoplasmic segment spans residues G1400–L1456. An interacts with and activates NS3 protease region spans residues L1407 to V1446. An intramembrane region (helical) is located at residues A1457 to L1477. Residues H1478–A2157 are Cytoplasmic-facing. Residues S1485 to L1665 form the Peptidase S7 domain. Active-site charge relay system; for serine protease NS3 activity residues include H1537, D1561, and S1622. In terms of domain architecture, Helicase ATP-binding spans P1669–Q1825. Residues K1673 to M1676 are important for RNA-binding. F1682–T1689 is an ATP binding site. The short motif at D1773–H1776 is the DEAH box element. Positions E1820–Y1997 constitute a Helicase C-terminal domain. Position 1877 is an N6-acetyllysine; by host (K1877). The segment at A1942 to Y1961 is disordered. Residues M2158 to F2178 form a helical membrane-spanning segment. The Lumenal segment spans residues M2179–R2186. Positions M2187 to K2207 form an intramembrane region, helical. Residues P2208–T2209 are Lumenal-facing. The chain crosses the membrane as a helical span at residues H2210–G2230. Residues Q2231 to A2241 lie on the Cytoplasmic side of the membrane. Residues Y2242–L2262 traverse the membrane as a helical segment. Topologically, residues E2263 to P2293 are lumenal. An intramembrane region (helical) is located at residues G2294–W2314. Residues I2315 to S2360 are Lumenal-facing. The chain crosses the membrane as a helical span at residues I2361–I2380. Residues L2381–P2421 lie on the Cytoplasmic side of the membrane. The chain crosses the membrane as a helical span at residues A2422 to A2442. The Lumenal portion of the chain corresponds to M2443–R2445. A helical membrane pass occupies residues T2446–E2466. Topologically, residues G2467 to L3411 are cytoplasmic. The region spanning G2508 to S2772 is the mRNA cap 0-1 NS5-type MT domain. Position 2563 (S2563) interacts with S-adenosyl-L-methionine. At S2563 the chain carries Phosphoserine. K2568 functions as the For 2'-O-MTase activity in the catalytic mechanism. Residues G2593, W2594, T2611, L2612, D2638, and I2639 each contribute to the S-adenosyl-L-methionine site. Catalysis depends on D2653, which acts as the For 2'-O-MTase activity. I2654 serves as a coordination point for S-adenosyl-L-methionine. Catalysis depends on for 2'-O-MTase activity residues K2689 and E2725. Y2727 serves as a coordination point for S-adenosyl-L-methionine. A Nuclear localization signal motif is present at residues R2879–R2912. Positions 2946, 2950, 2955, and 2958 each coordinate Zn(2+). In terms of domain architecture, RdRp catalytic spans G3036–A3188. Residues H3223, C3239, and C3358 each contribute to the Zn(2+) site.

The protein in the N-terminal section; belongs to the class I-like SAM-binding methyltransferase superfamily. mRNA cap 0-1 NS5-type methyltransferase family. Homodimer. Interacts (via N-terminus) with host EXOC1 (via C-terminus); this interaction results in EXOC1 degradation through the proteasome degradation pathway. As to quaternary structure, forms heterodimers with envelope protein E in the endoplasmic reticulum and Golgi. In terms of assembly, homodimer; in the endoplasmic reticulum and Golgi. Interacts with protein prM. Interacts with non-structural protein 1. Homodimer; Homohexamer when secreted. Interacts with envelope protein E. As to quaternary structure, interacts (via N-terminus) with serine protease NS3. In terms of assembly, forms a heterodimer with serine protease NS3. May form homooligomers. Forms a heterodimer with NS2B. Interacts with non-structural protein 2A (via N-terminus). Interacts with NS4B. Interacts with unphosphorylated RNA-directed RNA polymerase NS5; this interaction stimulates RNA-directed RNA polymerase NS5 guanylyltransferase activity. NS3 interacts with host PDCD6IP; this interaction contributes to virion release. As to quaternary structure, interacts with serine protease NS3. In terms of assembly, homodimer. Interacts with host STAT2; this interaction prevents the establishment of cellular antiviral state. Interacts with serine protease NS3. Interacts with host TRIM23; this interaction leads to NS5 ubiquitination. In terms of processing, specific enzymatic cleavages in vivo yield mature proteins. The nascent capsid protein C contains a C-terminal hydrophobic domain that act as a signal sequence for translocation of prM into the lumen of the ER. Mature capsid protein C is cleaved at a site upstream of this hydrophobic domain by NS3. prM is cleaved in post-Golgi vesicles by a host furin, releasing the mature small envelope protein M, and peptide pr. Non-structural protein 2A-alpha, a C-terminally truncated form of non-structural protein 2A, results from partial cleavage by NS3. Specific enzymatic cleavages in vivo yield mature proteins peptide 2K acts as a signal sequence and is removed from the N-terminus of NS4B by the host signal peptidase in the ER lumen. Signal cleavage at the 2K-4B site requires a prior NS3 protease-mediated cleavage at the 4A-2K site. Cleaved in post-Golgi vesicles by a host furin, releasing the mature small envelope protein M, and peptide pr. This cleavage is incomplete as up to 30% of viral particles still carry uncleaved prM. Post-translationally, N-glycosylated. In terms of processing, N-glycosylated. The excreted form is glycosylated and this is required for efficient secretion of the protein from infected cells. Polyubiquitinated; ubiquitination is probably mediated by host TRIM23 and is prerequisite for NS5-STAT2 interaction. NS5 is not ISGylated or sumoylated. Post-translationally, acetylated by host KAT5. Acetylation modulates NS3 RNA-binding and unwinding activities and plays an important positive role for viral replication. In terms of processing, phosphorylated on serines residues. This phosphorylation may trigger NS5 nuclear localization.

It is found in the virion. The protein localises to the host nucleus. The protein resides in the host cytoplasm. It localises to the host perinuclear region. Its subcellular location is the secreted. It is found in the virion membrane. The protein localises to the host endoplasmic reticulum membrane. The catalysed reaction is Selective hydrolysis of -Xaa-Xaa-|-Yaa- bonds in which each of the Xaa can be either Arg or Lys and Yaa can be either Ser or Ala.. The enzyme catalyses RNA(n) + a ribonucleoside 5'-triphosphate = RNA(n+1) + diphosphate. It carries out the reaction a ribonucleoside 5'-triphosphate + H2O = a ribonucleoside 5'-diphosphate + phosphate + H(+). It catalyses the reaction ATP + H2O = ADP + phosphate + H(+). The catalysed reaction is a 5'-end (5'-triphosphoguanosine)-ribonucleoside in mRNA + S-adenosyl-L-methionine = a 5'-end (N(7)-methyl 5'-triphosphoguanosine)-ribonucleoside in mRNA + S-adenosyl-L-homocysteine. The enzyme catalyses a 5'-end (N(7)-methyl 5'-triphosphoguanosine)-ribonucleoside in mRNA + S-adenosyl-L-methionine = a 5'-end (N(7)-methyl 5'-triphosphoguanosine)-(2'-O-methyl-ribonucleoside) in mRNA + S-adenosyl-L-homocysteine + H(+). In terms of biological role, plays a role in virus budding by binding to the cell membrane and gathering the viral RNA into a nucleocapsid that forms the core of a mature virus particle. During virus entry, may induce genome penetration into the host cytoplasm after hemifusion induced by the surface proteins. Can migrate to the cell nucleus where it modulates host functions. Functionally, inhibits RNA silencing by interfering with host Dicer. Its function is as follows. Prevents premature fusion activity of envelope proteins in trans-Golgi by binding to envelope protein E at pH6.0. After virion release in extracellular space, gets dissociated from E dimers. Acts as a chaperone for envelope protein E during intracellular virion assembly by masking and inactivating envelope protein E fusion peptide. prM is the only viral peptide matured by host furin in the trans-Golgi network probably to avoid catastrophic activation of the viral fusion activity in acidic Golgi compartment prior to virion release. prM-E cleavage is inefficient, and many virions are only partially matured. These uncleaved prM would play a role in immune evasion. In terms of biological role, may play a role in virus budding. Exerts cytotoxic effects by activating a mitochondrial apoptotic pathway through M ectodomain. May display a viroporin activity. Functionally, binds to host cell surface receptor and mediates fusion between viral and cellular membranes. Envelope protein is synthesized in the endoplasmic reticulum in the form of heterodimer with protein prM. They play a role in virion budding in the ER, and the newly formed immature particle is covered with 60 spikes composed of heterodimer between precursor prM and envelope protein E. The virion is transported to the Golgi apparatus where the low pH causes dissociation of PrM-E heterodimers and formation of E homodimers. prM-E cleavage is inefficient, and many virions are only partially matured. These uncleaved prM would play a role in immune evasion. Its function is as follows. Involved in immune evasion, pathogenesis and viral replication. Once cleaved off the polyprotein, is targeted to three destinations: the viral replication cycle, the plasma membrane and the extracellular compartment. Essential for viral replication. Required for formation of the replication complex and recruitment of other non-structural proteins to the ER-derived membrane structures. Excreted as a hexameric lipoparticle that plays a role against host immune response. Antagonizing the complement function. Binds to the host macrophages and dendritic cells. Inhibits signal transduction originating from Toll-like receptor 3 (TLR3). Component of the viral RNA replication complex that functions in virion assembly and antagonizes the host immune response. In terms of biological role, required cofactor for the serine protease function of NS3. May have membrane-destabilizing activity and form viroporins. Functionally, displays three enzymatic activities: serine protease, NTPase and RNA helicase. NS3 serine protease, in association with NS2B, performs its autocleavage and cleaves the polyprotein at dibasic sites in the cytoplasm: C-prM, NS2A-NS2B, NS2B-NS3, NS3-NS4A, NS4A-2K and NS4B-NS5. NS3 RNA helicase binds RNA and unwinds dsRNA in the 3' to 5' direction. Also plays a role in virus assembly. Its function is as follows. Regulates the ATPase activity of the NS3 helicase activity. NS4A allows NS3 helicase to conserve energy during unwinding. Functions as a signal peptide for NS4B and is required for the interferon antagonism activity of the latter. In terms of biological role, induces the formation of ER-derived membrane vesicles where the viral replication takes place. Inhibits interferon (IFN)-induced host STAT1 phosphorylation and nuclear translocation, thereby preventing the establishment of cellular antiviral state by blocking the IFN-alpha/beta pathway. Functionally, replicates the viral (+) and (-) RNA genome, and performs the capping of genomes in the cytoplasm. NS5 methylates viral RNA cap at guanine N-7 and ribose 2'-O positions. Besides its role in RNA genome replication, also prevents the establishment of cellular antiviral state by blocking the interferon-alpha/beta (IFN-alpha/beta) signaling pathway. IFN-I induces binding of NS5 to host IFN-activated transcription factor STAT2, preventing its transcriptional activity. Host TRIM23 is the E3 ligase that interacts with and polyubiquitinates NS5 to promote its binding to STAT2 and trigger IFN-I signaling inhibition. This Yellow fever virus (isolate Ethiopia/Couma/1961) (YFV) protein is Genome polyprotein.